The primary structure comprises 352 residues: Chalcone synthase C (352 aa).

Residue C170 is part of the active site.

Belongs to the thiolase-like superfamily. Chalcone/stilbene synthases family.

The enzyme catalyses (E)-4-coumaroyl-CoA + 3 malonyl-CoA + 3 H(+) = 2',4,4',6'-tetrahydroxychalcone + 3 CO2 + 4 CoA. It participates in secondary metabolite biosynthesis; flavonoid biosynthesis. The primary product of this enzyme is 4,2',4',6'-tetrahydroxychalcone (also termed naringenin-chalcone or chalcone) which can under specific conditions spontaneously isomerize into naringenin. The polypeptide is Chalcone synthase C (CHSC) (Ipomoea purpurea (Common morning glory)).